We begin with the raw amino-acid sequence, 837 residues long: Vacuolar membrane protease (837 aa).

At 1–36 (MSEEEVHDTSSEASEVFTNQPNAFVRGVRSIFGYRK) the chain is on the cytoplasmic side. Residues 37–57 (TSLTLFVILTIVVTAGLSFYD) traverse the membrane as a helical segment. At 58–355 (NSLELTIELP…FATPISALAR (298 aa)) the chain is on the vacuolar side. N143 is a glycosylation site (N-linked (GlcNAc...) asparagine). H157 and D169 together coordinate Zn(2+). Residue E201 is the Proton acceptor of the active site. Zn(2+)-binding residues include E202, E227, and H299. A helical membrane pass occupies residues 356-376 (VNLVLLVLFPVVSTPLLFVIV). Residues 377 to 384 (KYKKWKLR) are Cytoplasmic-facing. A helical membrane pass occupies residues 385–405 (VTNFLGVPLAMGLAVAVGQVG). Over 406–415 (NPMLVSSHPM) the chain is Vacuolar. Residues 416 to 436 (MVVATTTSIVVLVYYVVLNGV) form a helical membrane-spanning segment. The Cytoplasmic portion of the chain corresponds to 437–446 (DWVNTSSDQK). The chain crosses the membrane as a helical span at residues 447–467 (LVTMIEVSFVYWVVLVYVTWS). At 468–474 (GGDHTGE) the chain is on the vacuolar side. The chain crosses the membrane as a helical span at residues 475–495 (FGVTVLFFVQASTSLLGLIGW). At 496-539 (TFTRVRGGDEPLLSGEEERYGTEDERDTEKPLVEHNYDWSLQYL) the chain is on the cytoplasmic side. The chain crosses the membrane as a helical span at residues 540–560 (LIVPVSSLVVYNSGWLVLEGV). N561 carries an N-linked (GlcNAc...) asparagine glycan. Over 561–572 (NKTVQESLASEH) the chain is Vacuolar. The helical transmembrane segment at 573–593 (LIYWIVVVFSQFLVLPVVPFI) threads the bilayer. At 594–598 (TKFNR) the chain is on the cytoplasmic side. A helical membrane pass occupies residues 599–619 (YIVLGLSVVVVVGVLMSMAVH). Residues 620–837 (PFNQGSPMKL…LVGVVKHVDV (218 aa)) lie on the Vacuolar side of the membrane. N-linked (GlcNAc...) asparagine glycosylation occurs at N689.

The protein belongs to the peptidase M28 family. It depends on Zn(2+) as a cofactor.

It localises to the vacuole membrane. Functionally, may be involved in vacuolar sorting and osmoregulation. This is Vacuolar membrane protease from Candida albicans (strain SC5314 / ATCC MYA-2876) (Yeast).